A 553-amino-acid polypeptide reads, in one-letter code: CTP synthase (553 aa).

The amidoligase domain stretch occupies residues 1 to 275; the sequence is MPTETEYDPS…DQYVMEQFDM (275 aa). Ser24 contributes to the CTP binding site. Ser24 contributes to the UTP binding site. 25 to 30 lines the ATP pocket; sequence GLGKGI. Tyr65 contributes to the L-glutamine binding site. An ATP-binding site is contributed by Asp82. Residues Asp82 and Glu150 each coordinate Mg(2+). Residues 157-159, 196-201, and Lys232 contribute to the CTP site; these read DIE and KTKPTQ. Residues 196 to 201 and Lys232 each bind UTP; that span reads KTKPTQ. The region spanning 308 to 540 is the Glutamine amidotransferase type-1 domain; that stretch reads KYALEDAYMS…LDAVLERADV (233 aa). Gly362 serves as a coordination point for L-glutamine. The active-site Nucleophile; for glutamine hydrolysis is the Cys389. L-glutamine is bound by residues 390–393, Glu413, and Arg470; that span reads LGFQ. Active-site residues include His513 and Glu515.

This sequence belongs to the CTP synthase family. As to quaternary structure, homotetramer.

The catalysed reaction is UTP + L-glutamine + ATP + H2O = CTP + L-glutamate + ADP + phosphate + 2 H(+). The enzyme catalyses L-glutamine + H2O = L-glutamate + NH4(+). It catalyses the reaction UTP + NH4(+) + ATP = CTP + ADP + phosphate + 2 H(+). Its pathway is pyrimidine metabolism; CTP biosynthesis via de novo pathway; CTP from UDP: step 2/2. Its activity is regulated as follows. Allosterically activated by GTP, when glutamine is the substrate; GTP has no effect on the reaction when ammonia is the substrate. The allosteric effector GTP functions by stabilizing the protein conformation that binds the tetrahedral intermediate(s) formed during glutamine hydrolysis. Inhibited by the product CTP, via allosteric rather than competitive inhibition. Its function is as follows. Catalyzes the ATP-dependent amination of UTP to CTP with either L-glutamine or ammonia as the source of nitrogen. Regulates intracellular CTP levels through interactions with the four ribonucleotide triphosphates. This Halobacterium salinarum (strain ATCC 29341 / DSM 671 / R1) protein is CTP synthase.